The primary structure comprises 61 residues: Small ribosomal subunit protein uS14 (61 aa).

Zn(2+)-binding residues include C24, C27, C40, and C43.

The protein belongs to the universal ribosomal protein uS14 family. Zinc-binding uS14 subfamily. In terms of assembly, part of the 30S ribosomal subunit. Contacts proteins S3 and S10. The cofactor is Zn(2+).

Binds 16S rRNA, required for the assembly of 30S particles and may also be responsible for determining the conformation of the 16S rRNA at the A site. This Natranaerobius thermophilus (strain ATCC BAA-1301 / DSM 18059 / JW/NM-WN-LF) protein is Small ribosomal subunit protein uS14.